The sequence spans 1168 residues: Probable serine/threonine protein kinase IRE (1168 aa).

Disordered stretches follow at residues Met1–Ser165 and Glu377–Pro444. A compositionally biased stretch (low complexity) spans Pro16 to Thr25. Basic and acidic residues-rich tracts occupy residues Arg39–Glu54 and Gln107–Ala130. 2 stretches are compositionally biased toward polar residues: residues Gln146–Val163 and Thr401–Met414. The C2H2-type; atypical zinc finger occupies Cys488–Cys507. 3 disordered regions span residues Pro546–Glu566, Gly602–Ser622, and Ser717–Arg744. The 290-residue stretch at Phe754–Phe1043 folds into the Protein kinase domain. ATP is bound by residues Ile760–Val768 and Lys783. Asp877 acts as the Proton acceptor in catalysis. Positions Lys1044 to Asn1144 constitute an AGC-kinase C-terminal domain.

Belongs to the protein kinase superfamily. AGC Ser/Thr protein kinase family. As to expression, highly expressed in roots, elongating root hair cells and pollen grains.

It carries out the reaction L-seryl-[protein] + ATP = O-phospho-L-seryl-[protein] + ADP + H(+). The enzyme catalyses L-threonyl-[protein] + ATP = O-phospho-L-threonyl-[protein] + ADP + H(+). Modulates root tip growth. May play a common role in the tip growth of plant cells. In Arabidopsis thaliana (Mouse-ear cress), this protein is Probable serine/threonine protein kinase IRE.